Consider the following 153-residue polypeptide: Hemoglobin-3 (153 aa).

Ser2 is modified (N-acetylserine). Positions 4–150 (GLTGPQKAAL…ICRVQGDFMK (147 aa)) constitute a Globin domain. Residue His99 coordinates heme b.

It belongs to the globin family. In terms of assembly, homotetramer.

Its subcellular location is the cytoplasm. The polypeptide is Hemoglobin-3 (Phacoides pectinatus (Thick lucine)).